The following is a 240-amino-acid chain: Ribosomal RNA small subunit methyltransferase G (240 aa).

Residues Gly-79, Phe-84, 130–131, and Arg-149 each bind S-adenosyl-L-methionine; that span reads AE.

Belongs to the methyltransferase superfamily. RNA methyltransferase RsmG family.

It localises to the cytoplasm. Functionally, specifically methylates the N7 position of a guanine in 16S rRNA. This Lactobacillus helveticus (strain DPC 4571) protein is Ribosomal RNA small subunit methyltransferase G.